Here is a 338-residue protein sequence, read N- to C-terminus: tRNA (cytidine(56)-2'-O)-methyltransferase (338 aa).

S-adenosyl-L-methionine contacts are provided by residues L79 and G105 to V109. Residues L188 to G295 form the HD domain.

This sequence belongs to the aTrm56 family. In terms of assembly, homodimer.

The protein localises to the cytoplasm. It carries out the reaction cytidine(56) in tRNA + S-adenosyl-L-methionine = 2'-O-methylcytidine(56) in tRNA + S-adenosyl-L-homocysteine + H(+). Its function is as follows. Specifically catalyzes the AdoMet-dependent 2'-O-ribose methylation of cytidine at position 56 in tRNAs. The polypeptide is tRNA (cytidine(56)-2'-O)-methyltransferase (Thermoplasma volcanium (strain ATCC 51530 / DSM 4299 / JCM 9571 / NBRC 15438 / GSS1)).